A 139-amino-acid polypeptide reads, in one-letter code: Transcription antitermination protein NusB (139 aa).

Belongs to the NusB family.

Its function is as follows. Involved in transcription antitermination. Required for transcription of ribosomal RNA (rRNA) genes. Binds specifically to the boxA antiterminator sequence of the ribosomal RNA (rrn) operons. The protein is Transcription antitermination protein NusB of Klebsiella pneumoniae (strain 342).